Consider the following 39-residue polypeptide: Photosystem II reaction center protein L (39 aa).

Residues 18 to 38 (SLYLGLLLVFVTAVLFTSYFF) form a helical membrane-spanning segment.

Belongs to the PsbL family. In terms of assembly, PSII is composed of 1 copy each of membrane proteins PsbA, PsbB, PsbC, PsbD, PsbE, PsbF, PsbH, PsbI, PsbJ, PsbK, PsbL, PsbM, PsbT, PsbX, PsbY, Psb30/Ycf12, peripheral proteins PsbO, CyanoQ (PsbQ), PsbU, PsbV and a large number of cofactors. It forms dimeric complexes.

Its subcellular location is the cellular thylakoid membrane. One of the components of the core complex of photosystem II (PSII). PSII is a light-driven water:plastoquinone oxidoreductase that uses light energy to abstract electrons from H(2)O, generating O(2) and a proton gradient subsequently used for ATP formation. It consists of a core antenna complex that captures photons, and an electron transfer chain that converts photonic excitation into a charge separation. This subunit is found at the monomer-monomer interface and is required for correct PSII assembly and/or dimerization. The sequence is that of Photosystem II reaction center protein L from Prochlorococcus marinus (strain MIT 9313).